Here is a 132-residue protein sequence, read N- to C-terminus: Interleukin-5 (132 aa).

The signal sequence occupies residues 1 to 19 (MRMLLCLNVLTLSCVWAIA). 3 N-linked (GlcNAc...) asparagine glycosylation sites follow: Asn-45, Asn-74, and Asn-88.

It belongs to the IL-5 family. As to quaternary structure, homodimer; disulfide-linked. Interacts with IL5RA. Interacts with CSF2RB.

Its subcellular location is the secreted. Its function is as follows. Homodimeric cytokine expressed predominantly by T-lymphocytes and NK cells that plays an important role in the survival, differentiation, and chemotaxis of eosinophils. Acts also on activated and resting B-cells to induce immunoglobulin production, growth, and differentiation. Mechanistically, exerts its biological effects through a receptor composed of IL5RA subunit and the cytokine receptor common subunit beta/CSF2RB. Binding to the receptor leads to activation of various kinases including LYN, SYK and JAK2 and thereby propagates signals through the RAS-MAPK and JAK-STAT5 pathways respectively. This is Interleukin-5 (Il5) from Rattus norvegicus (Rat).